A 111-amino-acid polypeptide reads, in one-letter code: BET1-like protein (111 aa).

At 1–86 the chain is on the cytoplasmic side; that stretch reads MADWARAQSP…MARSGQDNRK (86 aa). Phosphoserine occurs at positions 9 and 37. Residues 15–77 enclose the t-SNARE coiled-coil homology domain; sequence EILDRENKRM…TGSVKRFSTM (63 aa). A helical; Anchor for type IV membrane protein membrane pass occupies residues 87–107; it reads LLCGMAVGLIVAFFILSYFLS. Topologically, residues 108–111 are lumenal; it reads RART.

Component of a SNARE complex consisting of STX5, YKT6, GOSR1 and BET1L. Interacts with STX5.

The protein localises to the golgi apparatus membrane. It localises to the golgi apparatus. It is found in the trans-Golgi network membrane. Functionally, vesicle SNARE required for targeting and fusion of retrograde transport vesicles with the Golgi complex. Required for the integrity of the Golgi complex. In Homo sapiens (Human), this protein is BET1-like protein.